A 493-amino-acid polypeptide reads, in one-letter code: Probable malate:quinone oxidoreductase (493 aa).

The protein belongs to the MQO family. The cofactor is FAD.

The enzyme catalyses (S)-malate + a quinone = a quinol + oxaloacetate. The protein operates within carbohydrate metabolism; tricarboxylic acid cycle; oxaloacetate from (S)-malate (quinone route): step 1/1. In Lysinibacillus sphaericus (strain C3-41), this protein is Probable malate:quinone oxidoreductase.